The sequence spans 78 residues: Small ribosomal subunit protein uS17 (78 aa).

This sequence belongs to the universal ribosomal protein uS17 family. As to quaternary structure, part of the 30S ribosomal subunit.

One of the primary rRNA binding proteins, it binds specifically to the 5'-end of 16S ribosomal RNA. The chain is Small ribosomal subunit protein uS17 from Pelagibacter ubique (strain HTCC1062).